We begin with the raw amino-acid sequence, 339 residues long: DNA-directed RNA polymerase subunit alpha (339 aa).

Residues 1–233 (MVREEVAGST…DLFLPFLHAE (233 aa)) form an alpha N-terminal domain (alpha-NTD) region. An alpha C-terminal domain (alpha-CTD) region spans residues 264-339 (KKGIPLNCIF…IDLLKNKLSF (76 aa)).

The protein belongs to the RNA polymerase alpha chain family. In plastids the minimal PEP RNA polymerase catalytic core is composed of four subunits: alpha, beta, beta', and beta''. When a (nuclear-encoded) sigma factor is associated with the core the holoenzyme is formed, which can initiate transcription.

The protein resides in the plastid. The protein localises to the chloroplast. It carries out the reaction RNA(n) + a ribonucleoside 5'-triphosphate = RNA(n+1) + diphosphate. In terms of biological role, DNA-dependent RNA polymerase catalyzes the transcription of DNA into RNA using the four ribonucleoside triphosphates as substrates. The protein is DNA-directed RNA polymerase subunit alpha of Secale strictum (Mountain rye).